Consider the following 314-residue polypeptide: Cyclic di-GMP binding protein TDE_0214 (314 aa).

Residues 146 to 234 (QKRRNERVVI…KTVRTEPVEG (89 aa)) enclose the PilZ domain. Residues 288-300 (TPVSSPIGTNTAP) show a composition bias toward polar residues. Positions 288–314 (TPVSSPIGTNTAPLTPPPADSAPEQIS) are disordered.

In terms of biological role, cyclic-di-GMP binding protein that plays important roles in motility, chemotaxis, biofilm formation and virulence. The protein is Cyclic di-GMP binding protein TDE_0214 of Treponema denticola (strain ATCC 35405 / DSM 14222 / CIP 103919 / JCM 8153 / KCTC 15104).